A 1767-amino-acid chain; its full sequence is MHEKDDLPQDSIADGIENDDESNGQEEEELDPDQGTAFVDSKEDMFVDAPEELNFDTPSKEALTTDDDDNDDLGTHFNIEKGDWEKELAGLQEQFKLLTGENDLTGEDGNTTVDIVSRFSKFLKTAKEERIQHEVALKELHGVISGRDDEIADLTTKISELSSSQPVSEMGDQAQNLEHLEAATDRIMVSLSNVFGEGELQYGSSISEKLAHLENRVSFLGAKYTEFYYGADQLRKCLASDVLDLSFQEDFGSALGAACSELFELKQKEAAFFERLSHLEDENRNFVEQVNREKEMCESMRTEFEKLKAELELEKTKCTNTKEKLSMAVTKGKALVQNRDALKHQLSEKTTELANRLTELQEKEIALESSEVMKGQLEQSLTEKTDELEKCYAELNDRSVSLEAYELTKKELEQSLAEKTKELEECLTKLQEMSTALDQSELDKGELAKSDAMVASYQEMLSVRNSIIENIETILSNIYTPEEGHSFDIVEKVRSLAEERKELTNVSQEYNRLKDLIVSIDLPEEMSQSSLESRLAWLRESFLQGKDEVNALQNRIESVSMSLSAEMEEKSNIRKELDDLSFSLKKMEETAERGSLEREEIVRRLVETSGLMTEGVEDHTSSDINLLVDRSFDKIEKQIRDSSDSSYGNEEIFEAFQSLLYVRDLEFSLCKEMLGEGELISFQVSNLSDELKIASQELAFVKEEKIALEKDLERSEEKSALLRDKLSMAIKKGKGLVQDREKFKTQLDEKKSEIEKLMLELQQLGGTVDGYKNQIDMLSRDLERTKELETELVATKEERDQLQQSLSLIDTLLQKVMKSVEIIALPVDLASEDPSEKIDRLAGYIQEVQLARVEEQEEIEKVKSEVDALTSKLAETQTALKLVEDALSTAEDNISRLTEENRNVQAAKENAELELQKAVADASSVASELDEVLATKSTLEAALMQAERNISDIISEKEEAQGRTATAEMEQEMLQKEASIQKNKLTEAHSTINSLEETLAQTESNMDSLSKQIEDDKVLTTSLKNELEKLKIEAEFERNKMAEASLTIVSHEEALMKAENSLSALQGEMVKAEGEISTLSSKLNVCMEELAGSSGNSQSKSLEIITHLDNLQMLLKDGGLISKVNEFLQRKFKSLRDVDVIARDITRNIGENGLLAGEMGNAEDDSTEAKSLLSDLDNSVNTEPENSQGSAADEDEISSSLRKMAEGVRLRNKTLENNFEGFSTSIDTLIATLMQNMTAARADVLNIVGHNSSLEEQVRSVENIVREQENTISALQKDLSSLISACGAAARELQLEVKNNLLELVQFQENENGGEMESTEDPQELHVSECAQRIKELSSAAEKACATLKLFETTNNAAATVIRDMENRLTEASVALEKAVLERDLNQTKVSSSEAKVESLEELCQDLKLQLENLRVKEEKWHEKEVELSTLYDKLLVQEQEAKENLIPASDMRTLFDKINGIEVPSVDLVNGLDPQSPYDVKKLFAIVDSVTEMQHQIDILSYGQKELNSTLAEKDLEIQGLKKATEAESTTELELVKAKNELSKLISGLEKLLGILASNNPVVDPNFSESWTLVQALEKKITSLLLESESSKSRAQELGLKLAGSEKLVDKLSLRVKEFEEKLQTKAIQPDIVQERSIFETPRAPSTSEISEIEDKGALGIKSISPVPTAAQVRTVRKGSTDHLSINIDSESEHLMNNNETDEDKGHVFKSLNMSGLIPTQGKIIADRVDGIWVSGGRVLMSRPQARLGVMVYSLLLHLWLLASIL.

Positions 1–72 (MHEKDDLPQD…LTTDDDDNDD (72 aa)) are disordered. Over 1–1748 (MHEKDDLPQD…RVLMSRPQAR (1748 aa)) the chain is Cytoplasmic. The span at 16–32 (IENDDESNGQEEEELDP) shows a compositional bias: acidic residues. Coiled-coil stretches lie at residues 276–436 (LSHL…MSTA), 493–516 (VRSL…LKDL), 570–590 (KSNI…MEET), 684–805 (VSNL…LQQS), and 845–1082 (IQEV…LSSK). The segment covering 1177 to 1190 (DNSVNTEPENSQGS) has biased composition (polar residues). The disordered stretch occupies residues 1177–1198 (DNSVNTEPENSQGSAADEDEIS). Coiled-coil stretches lie at residues 1251-1310 (NSSL…FQEN), 1362-1424 (IRDM…WHEK), 1522-1542 (LKKA…AKNE), and 1603-1630 (LAGS…KAIQ). Residues 1749–1766 (LGVMVYSLLLHLWLLASI) form a helical; Anchor for type IV membrane protein membrane-spanning segment. Position 1767 (L1767) is a topological domain, vesicular.

Interacts with SYP41. In terms of tissue distribution, expressed ubiquitously in roots, leaves and flowers, and, to a lower extent, in stems.

Its subcellular location is the golgi apparatus. The protein localises to the trans-Golgi network membrane. Its function is as follows. Tethering factor involved in vesicle fusion at the trans-Golgi network (TGN) thus being required for efficient protein trafficking to the vacuole. Implicated in resistance to salt and osmotic stresses. Modulates the cell morphology (e.g. epidermal cell file rotation (CFR) and cell expansion) in mature regions of roots and the base of hypocotyls as well as root skewing, a process leading to root movement within the soil in order to maximize anchorage and nutrient acquisition, probably by regulating microtubule stabilization independently of their orientation. The chain is Trans-Golgi network-localized SYP41-interacting protein 1 from Arabidopsis thaliana (Mouse-ear cress).